The sequence spans 952 residues: Leucine--tRNA ligase (952 aa).

Residues 48–58 carry the 'HIGH' region motif; that stretch reads PYLNGVLHAGH. The 'KMSKS' region signature appears at 644–648; it reads KLSKS. ATP is bound at residue K647.

Belongs to the class-I aminoacyl-tRNA synthetase family.

The protein localises to the cytoplasm. It carries out the reaction tRNA(Leu) + L-leucine + ATP = L-leucyl-tRNA(Leu) + AMP + diphosphate. The sequence is that of Leucine--tRNA ligase from Methanococcus vannielii (strain ATCC 35089 / DSM 1224 / JCM 13029 / OCM 148 / SB).